The chain runs to 215 residues: MSKIYDWFEERLEIQAIADDISSKYVPPHVNIFYCLGGITFTLFLVQVATGFAMTFYYRPTVAEAFASVNYLMTDVNFGWLIRSIHRWSASMMVLSMILHVCRVYLTGGFKRPRELTWITGVIMAVCTVSFGVTGYSLPWDQVGYWAVKIVTGVPDAIPVVGPAIVELLRGGVGVGQSTLTRFYSLHTFVLPLLTVVFMLAHFLMIRKQGISGPL.

The helical transmembrane segment at 32-52 threads the bilayer; the sequence is IFYCLGGITFTLFLVQVATGF. Cys35 lines the heme c pocket. 2 residues coordinate heme b: His86 and His100. The next 3 membrane-spanning stretches (helical) occupy residues 90–110, 116–136, and 186–206; these read ASMMVLSMILHVCRVYLTGGF, LTWITGVIMAVCTVSFGVTGY, and LHTFVLPLLTVVFMLAHFLMI. Heme b-binding residues include His187 and His202.

The protein belongs to the cytochrome b family. PetB subfamily. In terms of assembly, the 4 large subunits of the cytochrome b6-f complex are cytochrome b6, subunit IV (17 kDa polypeptide, PetD), cytochrome f and the Rieske protein, while the 4 small subunits are PetG, PetL, PetM and PetN. The complex functions as a dimer. The cofactor is heme b. Requires heme c as cofactor.

It is found in the plastid. It localises to the chloroplast thylakoid membrane. Its function is as follows. Component of the cytochrome b6-f complex, which mediates electron transfer between photosystem II (PSII) and photosystem I (PSI), cyclic electron flow around PSI, and state transitions. The polypeptide is Cytochrome b6 (Tupiella akineta (Green alga)).